We begin with the raw amino-acid sequence, 264 residues long: Spermidine/putrescine transport system permease protein PotC (264 aa).

6 helical membrane-spanning segments follow: residues 10–30, 66–86, 109–129, 131–151, 176–196, and 232–252; these read FMTAIYAYLYIPIIILIVNSF, MAVFSATFATLIGSLTAVALY, IVMAISLLVLFMLLGIQLGFW, LLFSHITFCLPFVVVTVYSRL, IILPLAMPAVAAGWVLSFTLS, and ALATILLVLSLVMVIASQLIA. The ABC transmembrane type-1 domain maps to 60-248; that stretch reads AQHSLTMAVF…VLSLVMVIAS (189 aa).

The protein belongs to the binding-protein-dependent transport system permease family. CysTW subfamily.

The protein resides in the cell inner membrane. Its function is as follows. Required for the activity of the bacterial periplasmic transport system of putrescine and spermidine. The sequence is that of Spermidine/putrescine transport system permease protein PotC (potC) from Shigella flexneri.